The sequence spans 241 residues: Anti-Pycsar protein Apyc1 (241 aa).

The segment at 17–215 is beta-lactamase-like; it reads DNNNALLEQD…SVQKKTWLMH (199 aa). 7 residues coordinate Zn(2+): His-59, His-61, Asp-63, His-64, His-142, Asp-162, and His-215.

The protein belongs to the nuclease anti-Pycsar protein Apyc1 family. Homodimer. It depends on Zn(2+) as a cofactor.

The catalysed reaction is 3',5'-cyclic CMP + H2O = CMP + H(+). It catalyses the reaction 3',5'-cyclic UMP + H2O = UMP + H(+). Functionally, counteracts the endogenous Pycsar antiviral defense system. Phosphodiesterase that enables metal-dependent hydrolysis of host cyclic nucleotide Pycsar defense signals such as cCMP and cUMP. The polypeptide is Anti-Pycsar protein Apyc1 (Paenibacillus harenae).